The primary structure comprises 134 residues: Large ribosomal subunit protein uL22 (134 aa).

It belongs to the universal ribosomal protein uL22 family. Part of the 50S ribosomal subunit.

This protein binds specifically to 23S rRNA; its binding is stimulated by other ribosomal proteins, e.g. L4, L17, and L20. It is important during the early stages of 50S assembly. It makes multiple contacts with different domains of the 23S rRNA in the assembled 50S subunit and ribosome. Functionally, the globular domain of the protein is located near the polypeptide exit tunnel on the outside of the subunit, while an extended beta-hairpin is found that lines the wall of the exit tunnel in the center of the 70S ribosome. This is Large ribosomal subunit protein uL22 from Rhodococcus jostii (strain RHA1).